Consider the following 252-residue polypeptide: Nicotinamide/nicotinic acid mononucleotide adenylyltransferase 3 (252 aa).

Residues Ser-14 and Phe-15 each contribute to the NAD(+) site. His-22 and Lys-56 together coordinate ATP. Residues Trp-90, Thr-93, Gly-135, and Asp-137 each contribute to the NAD(+) site. ATP is bound at residue Lys-140. Leu-147, Trp-148, Arg-167, and Asn-198 together coordinate NAD(+). Position 203–206 (Thr-203–Arg-206) interacts with ATP.

This sequence belongs to the eukaryotic NMN adenylyltransferase family. In terms of assembly, homotetramer. The cofactor is Mg(2+). As to expression, expressed in lung and spleen with lower levels in placenta and kidney.

The protein resides in the mitochondrion. The catalysed reaction is beta-nicotinamide D-ribonucleotide + ATP + H(+) = diphosphate + NAD(+). It carries out the reaction nicotinate beta-D-ribonucleotide + ATP + H(+) = deamido-NAD(+) + diphosphate. It functions in the pathway cofactor biosynthesis; NAD(+) biosynthesis; NAD(+) from nicotinamide D-ribonucleotide: step 1/1. Its pathway is cofactor biosynthesis; NAD(+) biosynthesis; deamido-NAD(+) from nicotinate D-ribonucleotide: step 1/1. Its activity is regulated as follows. Activity is strongly inhibited by galotannin. Inhibited by P1-(adenosine-5')-P4-(nicotinic-acid-riboside-5')-tetraphosphate (Nap4AD). Catalyzes the formation of NAD(+) from nicotinamide mononucleotide (NMN) and ATP. Can also use the deamidated form; nicotinic acid mononucleotide (NaMN) as substrate with the same efficiency. Can use triazofurin monophosphate (TrMP) as substrate. Can also use GTP and ITP as nucleotide donors. Also catalyzes the reverse reaction, i.e. the pyrophosphorolytic cleavage of NAD(+). For the pyrophosphorolytic activity, can use NAD(+), NADH, NaAD, nicotinic acid adenine dinucleotide phosphate (NHD), nicotinamide guanine dinucleotide (NGD) as substrates. Fails to cleave phosphorylated dinucleotides NADP(+), NADPH and NaADP(+). Protects against axonal degeneration following injury. May be involved in the maintenance of axonal integrity. Also functions as a stress-response chaperone protein that prevents toxic aggregation of proteins; this function may be independent of its NAD(+) synthesis activity. This is Nicotinamide/nicotinic acid mononucleotide adenylyltransferase 3 from Homo sapiens (Human).